Here is a 388-residue protein sequence, read N- to C-terminus: Succinate--CoA ligase [ADP-forming] subunit beta (388 aa).

In terms of domain architecture, ATP-grasp spans 9–244; that stretch reads KEILRKFGVA…LDEEDPAEIE (236 aa). ATP is bound by residues lysine 46, 53 to 55, glutamate 99, alanine 102, and glutamate 107; that span reads GRG. 2 residues coordinate Mg(2+): asparagine 199 and aspartate 213. Substrate is bound by residues asparagine 264 and 321 to 323; that span reads GIM.

The protein belongs to the succinate/malate CoA ligase beta subunit family. Heterotetramer of two alpha and two beta subunits. Mg(2+) is required as a cofactor.

It catalyses the reaction succinate + ATP + CoA = succinyl-CoA + ADP + phosphate. The enzyme catalyses GTP + succinate + CoA = succinyl-CoA + GDP + phosphate. It participates in carbohydrate metabolism; tricarboxylic acid cycle; succinate from succinyl-CoA (ligase route): step 1/1. Functionally, succinyl-CoA synthetase functions in the citric acid cycle (TCA), coupling the hydrolysis of succinyl-CoA to the synthesis of either ATP or GTP and thus represents the only step of substrate-level phosphorylation in the TCA. The beta subunit provides nucleotide specificity of the enzyme and binds the substrate succinate, while the binding sites for coenzyme A and phosphate are found in the alpha subunit. In Burkholderia cenocepacia (strain HI2424), this protein is Succinate--CoA ligase [ADP-forming] subunit beta.